Reading from the N-terminus, the 67-residue chain is MPKKLKIKLVKSPIGYSWDQKDTVKRLGLKKLNQVVIKDDLPQIRGMIRKVKHLVEVEEIEEGGSNA.

Belongs to the universal ribosomal protein uL30 family. As to quaternary structure, part of the 50S ribosomal subunit.

The sequence is that of Large ribosomal subunit protein uL30 from Thermotoga maritima (strain ATCC 43589 / DSM 3109 / JCM 10099 / NBRC 100826 / MSB8).